The chain runs to 446 residues: Adenylosuccinate synthetase (446 aa).

Residues 20-26 and 48-50 contribute to the GTP site; these read GDEGKGK and GHT. The Proton acceptor role is filled by Asp21. Positions 21 and 48 each coordinate Mg(2+). IMP contacts are provided by residues 21–24, 46–49, Thr137, Arg151, Gln232, Thr247, and Arg319; these read DEGK and NAGH. His49 serves as the catalytic Proton donor. 315 to 321 contributes to the substrate binding site; that stretch reads SVTGRPR. Residues Arg321, 347–349, and 429–431 contribute to the GTP site; these read KLD and STG.

It belongs to the adenylosuccinate synthetase family. In terms of assembly, homodimer. Mg(2+) serves as cofactor.

Its subcellular location is the cytoplasm. It catalyses the reaction IMP + L-aspartate + GTP = N(6)-(1,2-dicarboxyethyl)-AMP + GDP + phosphate + 2 H(+). It functions in the pathway purine metabolism; AMP biosynthesis via de novo pathway; AMP from IMP: step 1/2. In terms of biological role, plays an important role in the de novo pathway of purine nucleotide biosynthesis. Catalyzes the first committed step in the biosynthesis of AMP from IMP. This Ralstonia pickettii (strain 12J) protein is Adenylosuccinate synthetase.